Here is a 141-residue protein sequence, read N- to C-terminus: MAKKITGYIKLQIPAGKANPSPPIGPALGQHGVNIMEFCKAFNAKTQADEGTITPVVITVYADRSFSFITKTPPVPVLIKKTIGIESGSSVPNKNKVGKLTKAQVEEIAKKKMPDLNAASVEAAMRTVEGTARSMGVDIVE.

This sequence belongs to the universal ribosomal protein uL11 family. In terms of assembly, part of the ribosomal stalk of the 50S ribosomal subunit. Interacts with L10 and the large rRNA to form the base of the stalk. L10 forms an elongated spine to which L12 dimers bind in a sequential fashion forming a multimeric L10(L12)X complex. Post-translationally, one or more lysine residues are methylated.

Its function is as follows. Forms part of the ribosomal stalk which helps the ribosome interact with GTP-bound translation factors. This is Large ribosomal subunit protein uL11 from Trichlorobacter lovleyi (strain ATCC BAA-1151 / DSM 17278 / SZ) (Geobacter lovleyi).